A 230-amino-acid chain; its full sequence is Type II restriction enzyme SinI (230 aa).

The catalysed reaction is Endonucleolytic cleavage of DNA to give specific double-stranded fragments with terminal 5'-phosphates.. A P subtype restriction enzyme that recognizes the double-stranded sequence 5'-GGWCC-3' and cleaves after G-1. This chain is Type II restriction enzyme SinI (sinIR), found in Salmonella infantis.